Here is a 497-residue protein sequence, read N- to C-terminus: B3 domain-containing protein REM1 (497 aa).

3 consecutive DNA-binding regions (TF-B3) follow at residues 7–92 (PSLF…SSES), 142–239 (FLRA…LCSH), and 278–379 (FLTQ…HSKI). The segment at 87–135 (AVSSESDDDESDDTDDSESDDESNDTDDSESDDSEDNGEGDSSLVNKEA) is disordered. Residues 91-125 (ESDDDESDDTDDSESDDESNDTDDSESDDSEDNGE) are compositionally biased toward acidic residues.

As to expression, specifically expressed in the reproductive meristem.

It localises to the nucleus. In terms of biological role, may play a role in flower development. The chain is B3 domain-containing protein REM1 (REM1) from Brassica oleracea var. botrytis (Cauliflower).